Here is a 108-residue protein sequence, read N- to C-terminus: MTPSRLPWLLSWVSATAWRAARSPLLCHSLRKTSSSQGGKSELVKQSLKKPKLPEGRFDAPEDSHLEKEPLEKFPDDVNPVTKEKGGPRGPEPTRYGDWERKGRCIDF.

The transit peptide at Met-1–Ala-20 directs the protein to the mitochondrion. Residues Arg-31–Phe-108 are disordered. Basic and acidic residues-rich tracts occupy residues Lys-52 to Gly-87 and Arg-95 to Phe-108.

Belongs to the SDHAF4 family. In terms of assembly, interacts with SDHA in its FAD-bound form.

The protein resides in the mitochondrion matrix. In terms of biological role, plays an essential role in the assembly of succinate dehydrogenase (SDH), an enzyme complex (also referred to as respiratory complex II) that is a component of both the tricarboxylic acid (TCA) cycle and the mitochondrial electron transport chain, and which couples the oxidation of succinate to fumarate with the reduction of ubiquinone (coenzyme Q) to ubiquinol. Binds to the flavoprotein subunit SDHA in its FAD-bound form, blocking the generation of excess reactive oxygen species (ROS) and facilitating its assembly with the iron-sulfur protein subunit SDHB into the SDH catalytic dimer. This is Succinate dehydrogenase assembly factor 4, mitochondrial from Homo sapiens (Human).